The chain runs to 193 residues: Potassium-transporting ATPase KdpC subunit (193 aa).

Residues Phe11–Ala31 form a helical membrane-spanning segment.

The protein belongs to the KdpC family. As to quaternary structure, the system is composed of three essential subunits: KdpA, KdpB and KdpC.

Its subcellular location is the cell membrane. Part of the high-affinity ATP-driven potassium transport (or Kdp) system, which catalyzes the hydrolysis of ATP coupled with the electrogenic transport of potassium into the cytoplasm. This subunit acts as a catalytic chaperone that increases the ATP-binding affinity of the ATP-hydrolyzing subunit KdpB by the formation of a transient KdpB/KdpC/ATP ternary complex. This chain is Potassium-transporting ATPase KdpC subunit, found in Caldanaerobacter subterraneus subsp. tengcongensis (strain DSM 15242 / JCM 11007 / NBRC 100824 / MB4) (Thermoanaerobacter tengcongensis).